The chain runs to 513 residues: Maturase K (513 aa).

Belongs to the intron maturase 2 family. MatK subfamily.

It is found in the plastid. The protein resides in the chloroplast. In terms of biological role, usually encoded in the trnK tRNA gene intron. Probably assists in splicing its own and other chloroplast group II introns. This Danthonia spicata (Poverty oatgrass) protein is Maturase K.